We begin with the raw amino-acid sequence, 207 residues long: Large ribosomal subunit protein uL4 (207 aa).

The interval asparagine 53–glycine 76 is disordered. The span at glycine 60–glycine 71 shows a compositional bias: basic residues.

The protein belongs to the universal ribosomal protein uL4 family. Part of the 50S ribosomal subunit.

In terms of biological role, one of the primary rRNA binding proteins, this protein initially binds near the 5'-end of the 23S rRNA. It is important during the early stages of 50S assembly. It makes multiple contacts with different domains of the 23S rRNA in the assembled 50S subunit and ribosome. Forms part of the polypeptide exit tunnel. This chain is Large ribosomal subunit protein uL4, found in Staphylococcus saprophyticus subsp. saprophyticus (strain ATCC 15305 / DSM 20229 / NCIMB 8711 / NCTC 7292 / S-41).